We begin with the raw amino-acid sequence, 133 residues long: Small ribosomal subunit protein uS19 (133 aa).

Belongs to the universal ribosomal protein uS19 family. In terms of assembly, part of the 30S ribosomal subunit.

In terms of biological role, protein S19 forms a complex with S13 that binds strongly to the 16S ribosomal RNA. The protein is Small ribosomal subunit protein uS19 of Thermococcus kodakarensis (strain ATCC BAA-918 / JCM 12380 / KOD1) (Pyrococcus kodakaraensis (strain KOD1)).